Here is a 246-residue protein sequence, read N- to C-terminus: Ribonuclease PH (246 aa).

Phosphate contacts are provided by residues R91 and 129–131 (GTR).

This sequence belongs to the RNase PH family. In terms of assembly, homohexameric ring arranged as a trimer of dimers.

The catalysed reaction is tRNA(n+1) + phosphate = tRNA(n) + a ribonucleoside 5'-diphosphate. Its function is as follows. Phosphorolytic 3'-5' exoribonuclease that plays an important role in tRNA 3'-end maturation. Removes nucleotide residues following the 3'-CCA terminus of tRNAs; can also add nucleotides to the ends of RNA molecules by using nucleoside diphosphates as substrates, but this may not be physiologically important. Probably plays a role in initiation of 16S rRNA degradation (leading to ribosome degradation) during starvation. The protein is Ribonuclease PH of Burkholderia orbicola (strain MC0-3).